Reading from the N-terminus, the 307-residue chain is N-acetylglucosamine-1-phosphotransferase subunit gamma (307 aa).

The N-terminal stretch at 1-24 (MAGRLAGFLMLLGLASQGPAPAYA) is a signal peptide. The region spanning 69–171 (GKCFSLVEST…TFETPLVCHP (103 aa)) is the MRH domain. The cysteines at positions 71 and 84 are disulfide-linked. N-linked (GlcNAc...) asparagine glycosylation is found at asparagine 88 and asparagine 115. 2 disulfide bridges follow: cysteine 129-cysteine 157 and cysteine 142-cysteine 169. In terms of domain architecture, DMAP1-binding spans 176–279 (VYPTLSEALQ…HTQPTETTHS (104 aa)).

Homodimer; disulfide-linked. Hexamer of two alpha (GNPTAB), two beta (GNPTAB) and two gamma (GNPTG) subunits; disulfide-linked. The alpha and/or the beta subunits of the enzyme constitute the catalytic subunits. Post-translationally, cys-245 mediates the formation of the interchain disulfide bond for formation of the homodimer. Cys-142, Cys-157 and Cys-169 are involved in intramolecular disulfide bonds formation. Widely expressed. Highly expressed in the liver, intestine, brain, thymus, testis and ovary.

The protein resides in the secreted. It is found in the golgi apparatus. Its function is as follows. Non-catalytic subunit of the N-acetylglucosamine-1-phosphotransferase complex, an enzyme that catalyzes the formation of mannose 6-phosphate (M6P) markers on high mannose type oligosaccharides in the Golgi apparatus. Binds and presents the high mannose glycans of the acceptor to the catalytic alpha and beta subunits (GNPTAB). Enhances the rate of N-acetylglucosamine-1-phosphate transfer to the oligosaccharides of acid hydrolase acceptors. In Mus musculus (Mouse), this protein is N-acetylglucosamine-1-phosphotransferase subunit gamma (Gnptg).